The sequence spans 295 residues: Alpha-1A adrenergic receptor (295 aa).

The Extracellular segment spans residues 1-27 (MVFLSGNASDSSNCTHPPAPVNISKAI). Residues asparagine 7, asparagine 13, and asparagine 22 are each glycosylated (N-linked (GlcNAc...) asparagine). Residues 28–51 (LLGVILGGLIIFGVLGNILVILSV) traverse the membrane as a helical segment. At 52–64 (ACHRHLHSVTHYY) the chain is on the cytoplasmic side. A helical membrane pass occupies residues 65–88 (IVNLAVADLLLTSTVLPFSAIFEI). Residues 89–99 (LGYWAFGRVFC) are Extracellular-facing. Cysteine 99 and cysteine 176 are oxidised to a cystine. A helical transmembrane segment spans residues 100-122 (NIWAAVDVLCCTASIMGLCIISI). The Cytoplasmic segment spans residues 123 to 143 (DRYIGVSYPLRYPTIVTQKRG). Residues 144-167 (LMALLCVWALSLVISIGPLFGWRQ) form a helical membrane-spanning segment. The Extracellular segment spans residues 168 to 181 (PAPEDETICQITEE). Residues 182–205 (PGYVLFSALGSFYVPLTIILVMYC) form a helical membrane-spanning segment. Topologically, residues 206-273 (RVYVVAKRES…FSREKKAAKT (68 aa)) are cytoplasmic. Serine 215 carries the post-translational modification Phosphoserine; by PKA. The helical transmembrane segment at 274–295 (LGIVVGCFVLCWLPFFLVMPIG) threads the bilayer.

It belongs to the G-protein coupled receptor 1 family. Adrenergic receptor subfamily. ADRA1A sub-subfamily. Homo- and heterooligomer. Heterooligomerizes with ADRA1B homooligomers in cardiac myocytes. Interacts with CAVIN4.

It localises to the nucleus membrane. The protein resides in the cell membrane. It is found in the cytoplasm. The protein localises to the membrane. Its subcellular location is the caveola. In terms of biological role, this alpha-adrenergic receptor mediates its action by association with G proteins that activate a phosphatidylinositol-calcium second messenger system. Its effect is mediated by G(q) and G(11) proteins. Nuclear ADRA1A-ADRA1B heterooligomers regulate phenylephrine (PE)-stimulated ERK signaling in cardiac myocytes. The chain is Alpha-1A adrenergic receptor (ADRA1A) from Canis lupus familiaris (Dog).